A 448-amino-acid chain; its full sequence is Probable glycine dehydrogenase (decarboxylating) subunit 1 (448 aa).

Belongs to the GcvP family. N-terminal subunit subfamily. The glycine cleavage system is composed of four proteins: P, T, L and H. In this organism, the P 'protein' is a heterodimer of two subunits.

It carries out the reaction N(6)-[(R)-lipoyl]-L-lysyl-[glycine-cleavage complex H protein] + glycine + H(+) = N(6)-[(R)-S(8)-aminomethyldihydrolipoyl]-L-lysyl-[glycine-cleavage complex H protein] + CO2. The glycine cleavage system catalyzes the degradation of glycine. The P protein binds the alpha-amino group of glycine through its pyridoxal phosphate cofactor; CO(2) is released and the remaining methylamine moiety is then transferred to the lipoamide cofactor of the H protein. In Bacillus velezensis (strain DSM 23117 / BGSC 10A6 / LMG 26770 / FZB42) (Bacillus amyloliquefaciens subsp. plantarum), this protein is Probable glycine dehydrogenase (decarboxylating) subunit 1.